A 285-amino-acid polypeptide reads, in one-letter code: Release factor glutamine methyltransferase (285 aa).

Aspartate 143 and asparagine 189 together coordinate S-adenosyl-L-methionine. A substrate-binding site is contributed by 189–192 (NPPY).

The protein belongs to the protein N5-glutamine methyltransferase family. PrmC subfamily.

It catalyses the reaction L-glutaminyl-[peptide chain release factor] + S-adenosyl-L-methionine = N(5)-methyl-L-glutaminyl-[peptide chain release factor] + S-adenosyl-L-homocysteine + H(+). Methylates the class 1 translation termination release factors RF1/PrfA and RF2/PrfB on the glutamine residue of the universally conserved GGQ motif. This chain is Release factor glutamine methyltransferase, found in Clostridium acetobutylicum (strain ATCC 824 / DSM 792 / JCM 1419 / IAM 19013 / LMG 5710 / NBRC 13948 / NRRL B-527 / VKM B-1787 / 2291 / W).